The chain runs to 430 residues: Glucose-6-phosphate isomerase (430 aa).

Catalysis depends on glutamate 284, which acts as the Proton donor. Active-site residues include histidine 305 and lysine 420.

Belongs to the GPI family.

It is found in the cytoplasm. It catalyses the reaction alpha-D-glucose 6-phosphate = beta-D-fructose 6-phosphate. It functions in the pathway carbohydrate biosynthesis; gluconeogenesis. It participates in carbohydrate degradation; glycolysis; D-glyceraldehyde 3-phosphate and glycerone phosphate from D-glucose: step 2/4. In terms of biological role, catalyzes the reversible isomerization of glucose-6-phosphate to fructose-6-phosphate. The polypeptide is Glucose-6-phosphate isomerase (Mycoplasmopsis synoviae (strain 53) (Mycoplasma synoviae)).